The primary structure comprises 548 residues: Natural resistance-associated macrophage protein 1 (548 aa).

Positions 1–38 are disordered; sequence MSGDTGPPKQGGTRYGSISSPPSPEPQQAPPGGTYLSE. Residues 1–55 are Cytoplasmic-facing; the sequence is MSGDTGPPKQGGTRYGSISSPPSPEPQQAPPGGTYLSEKIPIPDTESGTFSLRKL. The chain crosses the membrane as a helical span at residues 56–73; that stretch reads WAFTGPGFLMSIAFLDPG. Topologically, residues 74-82 are extracellular; the sequence is NIESDLQAG. The helical transmembrane segment at 83–102 threads the bilayer; sequence AVAGFKLLWVLLWATVLGLL. Topologically, residues 103–139 are cytoplasmic; the sequence is CQRLAARLGVVTGKDLGEVCHLYYPKVPRILLWLTIE. A helical membrane pass occupies residues 140 to 160; it reads LAIVGSDMQEVIGTAIAFSLL. Residues 161–164 are Extracellular-facing; the sequence is SAGR. A helical transmembrane segment spans residues 165–184; it reads IPLWGGVLITIVDAFFFLFL. The Cytoplasmic portion of the chain corresponds to 185–193; sequence DNYGLRKLE. Residues 194 to 214 traverse the membrane as a helical segment; that stretch reads AFFGFLITIMALTFGYEYVVA. Residues 215–237 are Extracellular-facing; the sequence is QPAQGALLQGLFLPSCPGCGQPE. A helical membrane pass occupies residues 238 to 256; the sequence is LLQAVGIIGAIIMPHNIYL. The Cytoplasmic portion of the chain corresponds to 257-284; that stretch reads HSSLVKSREVDRSRRADIREANMYFLIE. A helical transmembrane segment spans residues 285-304; it reads ATIALSVSFLINLFVMAVFG. Residues 305–346 lie on the Extracellular side of the membrane; that stretch reads QAFYKQTNQAAFNICANSSLQDYAPIFPRNNLTVAVDIYQGG. N-linked (GlcNAc...) asparagine glycosylation is found at asparagine 321 and asparagine 335. A helical transmembrane segment spans residues 347-366; sequence VILGCLFGPAALYIWAVGLL. Topologically, residues 367–397 are cytoplasmic; that stretch reads AAGQSSTMTGTYAGQFVMEGFLKLRWSRFAR. A helical transmembrane segment spans residues 398 to 415; that stretch reads VLLTRSCAILPTVLLAVF. Residues 416 to 426 are Extracellular-facing; sequence RDLRDLSGLND. A helical membrane pass occupies residues 427-447; sequence LLNVLQSLLLPFAVLPILTFT. Topologically, residues 448-463 are cytoplasmic; sequence SMPALMREFANGLVSK. Residues 464–485 traverse the membrane as a helical segment; sequence VITSSIMVLVCAVNLYFVISYV. The Extracellular portion of the chain corresponds to 486 to 493; that stretch reads PSLPHPAY. Residues 494–513 form a helical membrane-spanning segment; that stretch reads FSLVALLAAAYLGLTTYLVW. Over 514-548 the chain is Cytoplasmic; that stretch reads TCLITQGATLLAHSSHQRFLYGLPEEDQEKGRTSG.

This sequence belongs to the NRAMP family.

The protein resides in the late endosome membrane. The protein localises to the lysosome membrane. The catalysed reaction is Zn(2+)(in) + H(+)(out) = Zn(2+)(out) + H(+)(in). It carries out the reaction Fe(2+)(in) + H(+)(out) = Fe(2+)(out) + H(+)(in). It catalyses the reaction Mn(2+)(in) + H(+)(out) = Mn(2+)(out) + H(+)(in). In terms of biological role, macrophage-specific antiporter that fluxes metal ions in either direction against a proton gradient. Localized to late endosomal lysosomal membranes, delivers bivalent cations from the cytosol into these acidic compartments where they may directly affect antimicrobial activity. Involved in iron metabolism and host natural resistance to infection with intracellular parasites. Pathogen resistance involves sequestration of Fe(2+) and Mn(2+), cofactors of both prokaryotic and eukaryotic catalases and superoxide dismutases, not only to protect the macrophage against its own generation of reactive oxygen species, but to deny the cations to the pathogen for synthesis of its protective enzymes. The polypeptide is Natural resistance-associated macrophage protein 1 (SLC11A1) (Bison bison (American bison)).